A 365-amino-acid chain; its full sequence is Heat-inducible transcription repressor HrcA (365 aa).

The protein belongs to the HrcA family.

Functionally, negative regulator of class I heat shock genes (grpE-dnaK-dnaJ and groELS operons). Prevents heat-shock induction of these operons. This Nodularia spumigena protein is Heat-inducible transcription repressor HrcA.